The chain runs to 619 residues: ATP-dependent zinc metalloprotease FtsH (619 aa).

The Cytoplasmic segment spans residues 1–5; the sequence is MKYFK. The chain crosses the membrane as a helical span at residues 6–26; sequence GISFYIIIFILILVIITFFTA. At 27 to 110 the chain is on the extracellular side; that stretch reads TDNPPKMSYS…VTQPPQPPWW (84 aa). A helical transmembrane segment spans residues 111 to 131; it reads VSMLPTVGLVIILILIWFFFI. The Cytoplasmic portion of the chain corresponds to 132 to 619; that stretch reads QQSQGGGGGN…GSSQTPQLEG (488 aa). Residue 204–211 coordinates ATP; sequence GPPGTGKT. Residue H426 participates in Zn(2+) binding. The active site involves E427. Zn(2+) is bound by residues H430 and D502.

In the central section; belongs to the AAA ATPase family. This sequence in the C-terminal section; belongs to the peptidase M41 family. As to quaternary structure, homohexamer. Zn(2+) is required as a cofactor.

It localises to the cell membrane. Its function is as follows. Acts as a processive, ATP-dependent zinc metallopeptidase for both cytoplasmic and membrane proteins. Plays a role in the quality control of integral membrane proteins. This chain is ATP-dependent zinc metalloprotease FtsH, found in Ruminiclostridium cellulolyticum (strain ATCC 35319 / DSM 5812 / JCM 6584 / H10) (Clostridium cellulolyticum).